Consider the following 324-residue polypeptide: Beta-ketoacyl-[acyl-carrier-protein] synthase III (324 aa).

Residues C114 and H251 contribute to the active site. Positions 252 to 256 (QANQR) are ACP-binding. N281 is an active-site residue.

It belongs to the thiolase-like superfamily. FabH family. As to quaternary structure, homodimer.

It is found in the cytoplasm. The catalysed reaction is malonyl-[ACP] + acetyl-CoA + H(+) = 3-oxobutanoyl-[ACP] + CO2 + CoA. Its pathway is lipid metabolism; fatty acid biosynthesis. Catalyzes the condensation reaction of fatty acid synthesis by the addition to an acyl acceptor of two carbons from malonyl-ACP. Catalyzes the first condensation reaction which initiates fatty acid synthesis and may therefore play a role in governing the total rate of fatty acid production. Possesses both acetoacetyl-ACP synthase and acetyl transacylase activities. Its substrate specificity determines the biosynthesis of branched-chain and/or straight-chain of fatty acids. The polypeptide is Beta-ketoacyl-[acyl-carrier-protein] synthase III (Rhodospirillum rubrum (strain ATCC 11170 / ATH 1.1.1 / DSM 467 / LMG 4362 / NCIMB 8255 / S1)).